The sequence spans 148 residues: Deoxyuridine 5'-triphosphate nucleotidohydrolase (148 aa).

Substrate contacts are provided by residues 67–69 (RSG), Asn-80, 84–86 (LID), and Met-94.

This sequence belongs to the dUTPase family. Mg(2+) is required as a cofactor.

It carries out the reaction dUTP + H2O = dUMP + diphosphate + H(+). Its pathway is pyrimidine metabolism; dUMP biosynthesis; dUMP from dCTP (dUTP route): step 2/2. In terms of biological role, this enzyme is involved in nucleotide metabolism: it produces dUMP, the immediate precursor of thymidine nucleotides and it decreases the intracellular concentration of dUTP so that uracil cannot be incorporated into DNA. The chain is Deoxyuridine 5'-triphosphate nucleotidohydrolase from Ralstonia pickettii (strain 12J).